The primary structure comprises 876 residues: Phosphoenolpyruvate carboxylase (876 aa).

Catalysis depends on residues H138 and K543.

The protein belongs to the PEPCase type 1 family. Mg(2+) serves as cofactor.

The enzyme catalyses oxaloacetate + phosphate = phosphoenolpyruvate + hydrogencarbonate. In terms of biological role, forms oxaloacetate, a four-carbon dicarboxylic acid source for the tricarboxylic acid cycle. This chain is Phosphoenolpyruvate carboxylase, found in Aliivibrio salmonicida (strain LFI1238) (Vibrio salmonicida (strain LFI1238)).